We begin with the raw amino-acid sequence, 133 residues long: MKYLILSLVANLLVFGVLSAIGLNINILAAMMIVLVIPIMISGILFFKTNIDKTYIFFNIIFIDFYYYIYNVHLMTLPKFNNYIKAEMMELEDIDVLITSKDFGFDEILFYTLYLLLILIVLYYLKKQVKHKI.

The next 4 membrane-spanning stretches (helical) occupy residues 3 to 23 (YLILSLVANLLVFGVLSAIGL), 27 to 47 (ILAAMMIVLVIPIMISGILFF), 55 to 75 (YIFFNIIFIDFYYYIYNVHLM), and 103 to 123 (FGFDEILFYTLYLLLILIVLY).

It is found in the cell membrane. Accessory element involved in the expression of sarA and several virulence factors. Modulates SarA production and/or function in a strain-dependent manner. Affects the transcription of the accessory gene regulator (agr) and genes encoding virulence factors including alpha toxin (hla) and protein A (spa). The chain is Protein msa (msa) from Staphylococcus aureus (strain USA300).